A 311-amino-acid polypeptide reads, in one-letter code: Salutaridine reductase (311 aa).

NADP(+) is bound by residues 21–24, arginine 44, 70–71, and asparagine 98; these read NKGI and DV. Substrate is bound by residues tyrosine 129 and serine 180. Residues tyrosine 236, lysine 240, and 267–272 each bind NADP(+); that span reads VKTEMN. The active-site Proton acceptor is the tyrosine 236. The cysteines at positions 263 and 305 are disulfide-linked.

Belongs to the short-chain dehydrogenases/reductases (SDR) family.

The enzyme catalyses (7S)-salutaridinol + NADP(+) = salutaridine + NADPH + H(+). It functions in the pathway alkaloid biosynthesis; morphine biosynthesis. With respect to regulation, strong substrate inhibition. Was thought to be due to mutually exclusive productive and non-productive modes of substrate binding in the active site. Alternatively, SALR may undergo significant conformational changes during catalytic turnover. Functionally, short-chain dehydrogenases/reductases involved in biosynthesis of morphinan-type benzylisoquinoline and opiate alkaloids natural products. Catalyzes specifically the stereospecific conversion of salutaridine to salutaridinol. In Papaver somniferum (Opium poppy), this protein is Salutaridine reductase.